The sequence spans 841 residues: Probable outer membrane usher protein EcpC (841 aa).

Positions 1 to 29 (MPLRRFSPGLKAQFAFGMVFLFVQPDASA) are cleaved as a signal peptide.

The protein belongs to the EcpC/MatD family.

Functionally, part of the ecpRABCDE operon, which encodes the E.coli common pilus (ECP). ECP is found in both commensal and pathogenic strains and plays a dual role in early-stage biofilm development and host cell recognition. The protein is Probable outer membrane usher protein EcpC (ecpC) of Escherichia coli O157:H7.